The sequence spans 176 residues: ATP synthase subunit b (176 aa).

A helical transmembrane segment spans residues 7 to 27; it reads IQIPDGSAIFVLLTFILLMFI. The disordered stretch occupies residues 75–94; it reads SQSQATALMENARKSSEEQS. The span at 85-94 shows a compositional bias: basic and acidic residues; the sequence is NARKSSEEQS.

Belongs to the ATPase B chain family. F-type ATPases have 2 components, F(1) - the catalytic core - and F(0) - the membrane proton channel. F(1) has five subunits: alpha(3), beta(3), gamma(1), delta(1), epsilon(1). F(0) has three main subunits: a(1), b(2) and c(10-14). The alpha and beta chains form an alternating ring which encloses part of the gamma chain. F(1) is attached to F(0) by a central stalk formed by the gamma and epsilon chains, while a peripheral stalk is formed by the delta and b chains.

The protein resides in the cell membrane. Functionally, f(1)F(0) ATP synthase produces ATP from ADP in the presence of a proton or sodium gradient. F-type ATPases consist of two structural domains, F(1) containing the extramembraneous catalytic core and F(0) containing the membrane proton channel, linked together by a central stalk and a peripheral stalk. During catalysis, ATP synthesis in the catalytic domain of F(1) is coupled via a rotary mechanism of the central stalk subunits to proton translocation. In terms of biological role, component of the F(0) channel, it forms part of the peripheral stalk, linking F(1) to F(0). This Oenococcus oeni (strain ATCC BAA-331 / PSU-1) protein is ATP synthase subunit b.